Consider the following 131-residue polypeptide: Small ribosomal subunit protein uS8 (131 aa).

This sequence belongs to the universal ribosomal protein uS8 family. In terms of assembly, part of the 30S ribosomal subunit. Contacts proteins S5 and S12.

One of the primary rRNA binding proteins, it binds directly to 16S rRNA central domain where it helps coordinate assembly of the platform of the 30S subunit. The chain is Small ribosomal subunit protein uS8 from Thermodesulfovibrio yellowstonii (strain ATCC 51303 / DSM 11347 / YP87).